The primary structure comprises 1057 residues: MPKRNDIKTILVIGSGPIIIGQAAEFDYAGTQACLALKEEGYRVILVNSNPATIMTDKEIADKVYIEPLTHDFIARIIRKEQPDALLPTLGGQTGLNMAIQLHESGVLQDNNVQLLGTELTSIQQAEDREMFRTLMNDLNVPVPESDIVNTVEQAFKFKEQVGYPLIVRPAFTMGGTGGGICHNDEELHEIVSNGLHYSPATQCLLEKSIAGFKEIEYEVMRDKNDNAIVVCNMENIDPVGIHTGDSIVVAPSQTLSDVEYQMLRDVSLKVIRALGIEGGCNVQLALDPHSFDYYIIEVNPRVSRSSALASKATGYPIAKLAAKIAVGLTLDEMLNPITGTSYAAFEPTLDYVISKIPRFPFDKFEKGERELGTQMKATGEVMAIGRTYEESLLKAIRSLEYGVHHLGLPNGESFDLDYIKERISHQDDERLFFIGEAIRRGTTLEEIHNMTQIDYFFLHKFQNIIDIEHQLKEHQGDLEYLKYAKDYGFSDKTIAHRFNMTEEEVYQLRMENDIKPVYKMVDTCAAEFESSTPYYYGTYETENESIVTDKEKILVLGSGPIRIGQGVEFDYATVHAVWAIQKAGYEAIIVNNNPETVSTDFSISDKLYFEPLTEEDVMNIINLEKPKGVVVQFGGQTAINLADKLAKHGVKILGTSLENLNRAEDRKEFEALLRKINVPQPQGKTATSPEEALANAAEIGYPVVVRPSYVLGGRAMEIVDNDKELENYMTQAVKASPEHPVLVDRYLTGKEIEVDAICDGETVIIPGIMEHIERAGVHSGDSIAVYPPQTLTEDELATLEDYTIKLAKGLNIIGLINIQFVIAHDGVYVLEVNPRSSRTVPFLSKITDIPMAQLAMRAIIGEKLTDMGYQEGVQPYAEGVFVKAPVFSFNKLKNVDITLGPEMKSTGEVMGKDTTLEKALFKGLTGSGVEVKDHGTVLMTVSDKDKEEVVKLAQRLNEVGYKILATSGTANKLAEYDIPAEVVGKIGGENDLLTRIQNGDVQIVINTMTKGKEVERDGFQIRRTTVENGIPCLTSLDTANALTNVIESMTFTMRQM.

A carboxyphosphate synthetic domain region spans residues M1 to E401. R129, R169, G175, G176, K208, I210, E215, G241, I242, H243, Q284, and E298 together coordinate ATP. One can recognise an ATP-grasp 1 domain in the interval R133–V327. The Mg(2+) site is built by Q284, E298, and N300. Mn(2+)-binding residues include Q284, E298, and N300. The oligomerization domain stretch occupies residues Y402–S546. Residues I547–G929 form a carbamoyl phosphate synthetic domain region. One can recognise an ATP-grasp 2 domain in the interval E671–I861. The ATP site is built by R707, R746, L748, E752, G777, V778, H779, S780, Q820, and E832. The Mg(2+) site is built by Q820, E832, and N834. Positions 820, 832, and 834 each coordinate Mn(2+). Positions V930–M1057 constitute an MGS-like domain. The tract at residues V930–M1057 is allosteric domain.

The protein belongs to the CarB family. As to quaternary structure, composed of two chains; the small (or glutamine) chain promotes the hydrolysis of glutamine to ammonia, which is used by the large (or ammonia) chain to synthesize carbamoyl phosphate. Tetramer of heterodimers (alpha,beta)4. It depends on Mg(2+) as a cofactor. Requires Mn(2+) as cofactor.

The enzyme catalyses hydrogencarbonate + L-glutamine + 2 ATP + H2O = carbamoyl phosphate + L-glutamate + 2 ADP + phosphate + 2 H(+). It catalyses the reaction hydrogencarbonate + NH4(+) + 2 ATP = carbamoyl phosphate + 2 ADP + phosphate + 2 H(+). It participates in amino-acid biosynthesis; L-arginine biosynthesis; carbamoyl phosphate from bicarbonate: step 1/1. Its pathway is pyrimidine metabolism; UMP biosynthesis via de novo pathway; (S)-dihydroorotate from bicarbonate: step 1/3. Its function is as follows. Large subunit of the glutamine-dependent carbamoyl phosphate synthetase (CPSase). CPSase catalyzes the formation of carbamoyl phosphate from the ammonia moiety of glutamine, carbonate, and phosphate donated by ATP, constituting the first step of 2 biosynthetic pathways, one leading to arginine and/or urea and the other to pyrimidine nucleotides. The large subunit (synthetase) binds the substrates ammonia (free or transferred from glutamine from the small subunit), hydrogencarbonate and ATP and carries out an ATP-coupled ligase reaction, activating hydrogencarbonate by forming carboxy phosphate which reacts with ammonia to form carbamoyl phosphate. The protein is Carbamoyl phosphate synthase large chain of Staphylococcus aureus (strain USA300 / TCH1516).